The sequence spans 959 residues: Isoleucine--tRNA ligase (959 aa).

Positions 66 to 76 match the 'HIGH' region motif; the sequence is PYANGDLHIGH. Glutamate 592 is an L-isoleucyl-5'-AMP binding site. A 'KMSKS' region motif is present at residues 633-637; sequence KMSKS. Lysine 636 is a binding site for ATP. Positions 922, 925, 942, and 945 each coordinate Zn(2+).

It belongs to the class-I aminoacyl-tRNA synthetase family. IleS type 1 subfamily. In terms of assembly, monomer. Zn(2+) serves as cofactor.

The protein localises to the cytoplasm. It catalyses the reaction tRNA(Ile) + L-isoleucine + ATP = L-isoleucyl-tRNA(Ile) + AMP + diphosphate. Catalyzes the attachment of isoleucine to tRNA(Ile). As IleRS can inadvertently accommodate and process structurally similar amino acids such as valine, to avoid such errors it has two additional distinct tRNA(Ile)-dependent editing activities. One activity is designated as 'pretransfer' editing and involves the hydrolysis of activated Val-AMP. The other activity is designated 'posttransfer' editing and involves deacylation of mischarged Val-tRNA(Ile). In Ralstonia pickettii (strain 12J), this protein is Isoleucine--tRNA ligase.